The sequence spans 510 residues: GMP synthase [glutamine-hydrolyzing] (510 aa).

One can recognise a Glutamine amidotransferase type-1 domain in the interval 5-195 (PILVVNFGSQ…IYGVCKAEKN (191 aa)). Cysteine 82 (nucleophile) is an active-site residue. Active-site residues include histidine 169 and glutamate 171. In terms of domain architecture, GMPS ATP-PPase spans 196–385 (WEMGDFIHEK…LGVPEEILRR (190 aa)). An ATP-binding site is contributed by 223–229 (SGGVDST).

As to quaternary structure, homodimer.

The catalysed reaction is XMP + L-glutamine + ATP + H2O = GMP + L-glutamate + AMP + diphosphate + 2 H(+). Its pathway is purine metabolism; GMP biosynthesis; GMP from XMP (L-Gln route): step 1/1. Catalyzes the synthesis of GMP from XMP. This Aquifex aeolicus (strain VF5) protein is GMP synthase [glutamine-hydrolyzing] (guaA).